The primary structure comprises 372 residues: 12-oxophytodienoate reductase 1 (372 aa).

At M1 the chain carries N-acetylmethionine. FMN contacts are provided by residues 31–33 (PLT), A64, and Q106. H183 is a substrate binding site. Catalysis depends on Y188, which acts as the Proton donor. R235 is an FMN binding site. R275 serves as a coordination point for substrate. FMN contacts are provided by residues 303-305 (AGG) and 326-327 (GR).

This sequence belongs to the NADH:flavin oxidoreductase/NADH oxidase family. FMN is required as a cofactor. In terms of tissue distribution, mostly expressed in roots, also present in leaves, shoots and flowers. More abundant in cotyledons. In more details, expressed in peduncles, sepals, petals, around the abscission zone of siliques, maturing siliques and developing seeds.

It is found in the cytoplasm. The catalysed reaction is (1S,2S)-OPC-8 + NADP(+) = (9S,13S,15Z)-12-oxophyto-10,15-dienoate + NADPH + H(+). It functions in the pathway lipid metabolism; oxylipin biosynthesis. In terms of biological role, specifically cleaves olefinic bonds in alpha,beta-unsaturated carbonyls and may be involved in detoxification or modification of these reactive compounds. May be involved in the biosynthesis or metabolism of oxylipin signaling molecules. In vitro, reduces 9R,13R-12-oxophytodienoic acid (9R,13R-OPDA) to 9R,13R-OPC-8:0, but only poorly 9S,13S-OPDA, the natural precursor of jasmonic acid. Can detoxify the explosive 2,4,6-trinitrotoluene (TNT) in vitro and in vivo by catalyzing its nitroreduction to form hydroxylamino-dinitrotoluene (HADNT). In Arabidopsis thaliana (Mouse-ear cress), this protein is 12-oxophytodienoate reductase 1.